The following is a 130-amino-acid chain: MTDPIADFLTRIRNANMVYQEKVEVPASRVKRALAEILKNEGYIKNYEYIEDNKQGILRLYLKYGPNKEKVITGLKRISCPGLRVYAKKGEIPRVLGGLGVAVISTSKGILTDKEARRQGVGGEVICYIW.

The protein belongs to the universal ribosomal protein uS8 family. As to quaternary structure, part of the 30S ribosomal subunit. Contacts proteins S5 and S12.

One of the primary rRNA binding proteins, it binds directly to 16S rRNA central domain where it helps coordinate assembly of the platform of the 30S subunit. The sequence is that of Small ribosomal subunit protein uS8 from Moorella thermoacetica (strain ATCC 39073 / JCM 9320).